We begin with the raw amino-acid sequence, 93 residues long: Alpha-defensin 21 (93 aa).

Positions 1-19 (MKTLVLLSALILLAYQVQT) are cleaved as a signal peptide. Residues 20–58 (DPIQNTDEETNTEEQPGEDDQAVSVSFGGQEGSALHEKL) constitute a propeptide that is removed on maturation. The segment at 22 to 43 (IQNTDEETNTEEQPGEDDQAVS) is disordered. Over residues 25-40 (TDEETNTEEQPGEDDQ) the composition is skewed to acidic residues. 3 cysteine pairs are disulfide-bonded: Cys64/Cys89, Cys66/Cys81, and Cys71/Cys88.

The protein belongs to the alpha-defensin family.

The protein localises to the secreted. In terms of biological role, may have microbicidal activities. This is Alpha-defensin 21 (Defa21) from Mus musculus (Mouse).